The following is a 222-amino-acid chain: UPF0173 metal-dependent hydrolase Kcr_0055 (222 aa).

The protein belongs to the UPF0173 family.

This is UPF0173 metal-dependent hydrolase Kcr_0055 from Korarchaeum cryptofilum (strain OPF8).